We begin with the raw amino-acid sequence, 237 residues long: Orotidine 5'-phosphate decarboxylase (237 aa).

Substrate is bound by residues Asp-10, Lys-33, 60–69 (DLKLHDIPNT), Thr-123, Arg-185, Gln-194, Gly-214, and Arg-215. The Proton donor role is filled by Lys-62.

Belongs to the OMP decarboxylase family. Type 1 subfamily. As to quaternary structure, homodimer.

It carries out the reaction orotidine 5'-phosphate + H(+) = UMP + CO2. It participates in pyrimidine metabolism; UMP biosynthesis via de novo pathway; UMP from orotate: step 2/2. In terms of biological role, catalyzes the decarboxylation of orotidine 5'-monophosphate (OMP) to uridine 5'-monophosphate (UMP). The chain is Orotidine 5'-phosphate decarboxylase from Enterococcus faecalis (strain ATCC 700802 / V583).